We begin with the raw amino-acid sequence, 226 residues long: N-acetylmuramic acid 6-phosphate phosphatase (226 aa).

Asp-12 serves as the catalytic Nucleophile. Residues Asp-12, Asp-14, and Asp-171 each contribute to the Mg(2+) site. The active-site Proton donor is the Asp-14.

This sequence belongs to the HAD-like hydrolase superfamily. CbbY/CbbZ/Gph/YieH family. Phosphatase MupP subfamily. Mg(2+) is required as a cofactor.

The catalysed reaction is N-acetyl-D-muramate 6-phosphate + H2O = N-acetyl-D-muramate + phosphate. Its pathway is cell wall biogenesis; peptidoglycan recycling. In terms of biological role, specifically catalyzes the dephosphorylation of N-acetylmuramate 6-phosphate (MurNAc-6P) to MurNac. Is involved in peptidoglycan recycling as part of a cell wall recycling pathway that bypasses de novo biosynthesis of the peptidoglycan precursor UDP-MurNAc. Plays a role in intrinsic resistance to fosfomycin, which targets the de novo synthesis of UDP-MurNAc. The protein is N-acetylmuramic acid 6-phosphate phosphatase of Pseudomonas aeruginosa (strain ATCC 15692 / DSM 22644 / CIP 104116 / JCM 14847 / LMG 12228 / 1C / PRS 101 / PAO1).